The sequence spans 85 residues: Beta-insect depressant toxin Lqh-dprIT3a (85 aa).

The first 21 residues, 1-21, serve as a signal peptide directing secretion; that stretch reads MKLLLLLTISASMLIEGLVNA. The region spanning 22–82 is the LCN-type CS-alpha/beta domain; the sequence is DGYIRGGDGC…EWDYETNTCG (61 aa). Disulfide bonds link Cys-31-Cys-81, Cys-35-Cys-56, Cys-42-Cys-63, and Cys-46-Cys-65. Gly-82 is modified (glycine amide).

This sequence belongs to the long (4 C-C) scorpion toxin superfamily. Sodium channel inhibitor family. Beta subfamily. In terms of tissue distribution, expressed by the venom gland.

It is found in the secreted. In terms of biological role, depressant insect beta-toxins cause a transient contraction paralysis followed by a slow flaccid paralysis. They bind voltage-independently at site-4 of sodium channels (Nav) and block action potentials, primarily by depolarizing the axonal membrane and suppressing the sodium current. This depressant toxin is active only on insects. It is found in a relatively small amount in the venom, and its activity on insects is 10-fold higher compared to other known depressant toxins. This Leiurus hebraeus (Hebrew deathstalker scorpion) protein is Beta-insect depressant toxin Lqh-dprIT3a.